A 577-amino-acid polypeptide reads, in one-letter code: MPKTISVRVTTMDAELEFAIQPNTTGKQLFDQVVKTIGLREVWFFGLQYQDTKGFSTWLKLNKKVTAQDVRKESPLLFKFRAKFYPEDVSEELIQDITQRLFFLQVKEGILNDDIYCPPETAVLLASYAVQSKYGDFNKEVHKSGYLAGDKLLPQRVLEQHKLNKDQWEERIQVWHEEHRGMLREDAVLEYLKIAQDLEMYGVNYFSIKNKKGSELWLGVDALGLNIYEQNDRLTPKIGFPWSEIRNISFNDKKFVIKPIDKKAPDFVFYAPRLRINKRILALCMGNHELYMRRRKPDTIEVQQMKAQAREEKHQKQMERAMLENEKKKREMAEKEKEKIEREKEELMERLKQIEEQTKKAQQELEEQTRRALELEQERKRAQSEAEKLAKERQEAEEAKEALLQASRDQKKTQEQLALEMAELTARISQLEMARQKKESEAVEWQQKAQMVQEDLEKTRAELKTAMSTPHVAEPAENEQDEQDENGAEASADLRADAMAKDRSEEERTTEAEKNERVQKHLKALTSELANARDESKKTANDMIHAENMRLGRDKYKTLRQIRQGNTKQRIDEFESM.

The 294-residue stretch at 2 to 295 (PKTISVRVTT…GNHELYMRRR (294 aa)) folds into the FERM domain. Residue Ser74 is modified to Phosphoserine. Lys79 carries the post-translational modification N6-acetyllysine. Lys83 carries the N6-succinyllysine modification. The short motif at 115–120 (IYCPPE) is the [IL]-x-C-x-x-[DE] motif element. Position 116 is a phosphotyrosine (Tyr116). Residue Cys117 is modified to S-nitrosocysteine. Lys139 and Lys165 each carry N6-acetyllysine. Disordered stretches follow at residues 323-342 (LENEKKKREMAEKEKEKIER), 375-409 (LEQERKRAQSEAEKLAKERQEAEEAKEALLQASRD), and 466-518 (AMST…NERV). Basic and acidic residues predominate over residues 375-401 (LEQERKRAQSEAEKLAKERQEAEEAKE). Residue Ser407 is modified to Phosphoserine. A compositionally biased stretch (acidic residues) spans 476-487 (AENEQDEQDENG). Positions 492–518 (ADLRADAMAKDRSEEERTTEAEKNERV) are enriched in basic and acidic residues. Ser527 is subject to Phosphoserine. Position 558 is a phosphothreonine; by ROCK2 and STK10 (Thr558).

In terms of assembly, in resting T-cells, part of a PAG1-NHERF1-MSN complex which is disrupted upon TCR activation. Interacts with NHERF1. Interacts with PPP1R16B. Interacts with SELPLG and SYK; these interactions mediate the activation of SYK by SELPLG. Interacts with PDPN (via cytoplasmic domain); this interaction activates RHOA and promotes epithelial-mesenchymal transition. Interacts with SPN/CD43 cytoplasmic tail. Interacts with CD44. Interacts with ICAM2. Interacts with ICAM3 (via C-terminus). Interacts with PDZD8. Interacts with F-actin. Interacts with CD46. Interacts with PTPN6. (Microbial infection) Interacts with HIV-1 envelope protein gp120. Phosphorylation on Thr-558 is crucial for the formation of microvilli-like structures. Phosphorylation by ROCK2 suppresses the head-to-tail association of the N-terminal and C-terminal halves resulting in an opened conformation which is capable of actin and membrane-binding. Phosphorylation on Thr-558 by STK10 negatively regulates lymphocyte migration and polarization. Post-translationally, S-nitrosylation of Cys-117 is induced by interferon-gamma and oxidatively-modified low-densitity lipoprotein (LDL(ox)) implicating the iNOS-S100A8/9 transnitrosylase complex. In all tissues and cultured cells studied.

Its subcellular location is the cell membrane. It is found in the cytoplasm. The protein resides in the cytoskeleton. It localises to the apical cell membrane. The protein localises to the cell projection. Its subcellular location is the microvillus membrane. It is found in the microvillus. With respect to regulation, a head-to-tail association, of the N-terminal and C-terminal halves results in a closed conformation (inactive form) which is incapable of actin or membrane-binding. Functionally, ezrin-radixin-moesin (ERM) family protein that connects the actin cytoskeleton to the plasma membrane and thereby regulates the structure and function of specific domains of the cell cortex. Tethers actin filaments by oscillating between a resting and an activated state providing transient interactions between moesin and the actin cytoskeleton. Once phosphorylated on its C-terminal threonine, moesin is activated leading to interaction with F-actin and cytoskeletal rearrangement. These rearrangements regulate many cellular processes, including cell shape determination, membrane transport, and signal transduction. The role of moesin is particularly important in immunity acting on both T and B-cells homeostasis and self-tolerance, regulating lymphocyte egress from lymphoid organs. Modulates phagolysosomal biogenesis in macrophages. Also participates in immunologic synapse formation. In Homo sapiens (Human), this protein is Moesin.